Reading from the N-terminus, the 153-residue chain is uncharacterized protein (153 aa).

This is an uncharacterized protein from Ureaplasma parvum serovar 3 (strain ATCC 700970).